A 188-amino-acid polypeptide reads, in one-letter code: Crossover junction endodeoxyribonuclease RuvC (188 aa).

Catalysis depends on residues D7, E68, and D141. Positions 7, 68, and 141 each coordinate Mg(2+).

It belongs to the RuvC family. Homodimer which binds Holliday junction (HJ) DNA. The HJ becomes 2-fold symmetrical on binding to RuvC with unstacked arms; it has a different conformation from HJ DNA in complex with RuvA. In the full resolvosome a probable DNA-RuvA(4)-RuvB(12)-RuvC(2) complex forms which resolves the HJ. Mg(2+) serves as cofactor.

It is found in the cytoplasm. It carries out the reaction Endonucleolytic cleavage at a junction such as a reciprocal single-stranded crossover between two homologous DNA duplexes (Holliday junction).. In terms of biological role, the RuvA-RuvB-RuvC complex processes Holliday junction (HJ) DNA during genetic recombination and DNA repair. Endonuclease that resolves HJ intermediates. Cleaves cruciform DNA by making single-stranded nicks across the HJ at symmetrical positions within the homologous arms, yielding a 5'-phosphate and a 3'-hydroxyl group; requires a central core of homology in the junction. The consensus cleavage sequence is 5'-(A/T)TT(C/G)-3'. Cleavage occurs on the 3'-side of the TT dinucleotide at the point of strand exchange. HJ branch migration catalyzed by RuvA-RuvB allows RuvC to scan DNA until it finds its consensus sequence, where it cleaves and resolves the cruciform DNA. The protein is Crossover junction endodeoxyribonuclease RuvC of Mycobacterium tuberculosis (strain ATCC 25177 / H37Ra).